The chain runs to 212 residues: Transcription antitermination protein NusB (212 aa).

Disordered regions lie at residues 1–34 (MSDE…SKSN) and 169–212 (EHDR…QAAG). Residues 178 to 212 (APAQPAAKADTATDAVADAATDAAAADDAADQAAG) are compositionally biased toward low complexity.

This sequence belongs to the NusB family.

Its function is as follows. Involved in transcription antitermination. Required for transcription of ribosomal RNA (rRNA) genes. Binds specifically to the boxA antiterminator sequence of the ribosomal RNA (rrn) operons. This Delftia acidovorans (strain DSM 14801 / SPH-1) protein is Transcription antitermination protein NusB.